We begin with the raw amino-acid sequence, 198 residues long: ATP-dependent Clp protease proteolytic subunit (198 aa).

Serine 101 (nucleophile) is an active-site residue. Histidine 126 is an active-site residue.

It belongs to the peptidase S14 family. In terms of assembly, component of the chloroplastic Clp protease core complex.

Its subcellular location is the plastid. The protein localises to the chloroplast stroma. It carries out the reaction Hydrolysis of proteins to small peptides in the presence of ATP and magnesium. alpha-casein is the usual test substrate. In the absence of ATP, only oligopeptides shorter than five residues are hydrolyzed (such as succinyl-Leu-Tyr-|-NHMec, and Leu-Tyr-Leu-|-Tyr-Trp, in which cleavage of the -Tyr-|-Leu- and -Tyr-|-Trp bonds also occurs).. Functionally, cleaves peptides in various proteins in a process that requires ATP hydrolysis. Has a chymotrypsin-like activity. Plays a major role in the degradation of misfolded proteins. The polypeptide is ATP-dependent Clp protease proteolytic subunit (Psilotum nudum (Whisk fern)).